Reading from the N-terminus, the 473-residue chain is MALQTREARTLAEKVWDDHVVVSGRNEAPDLIYIDLHLVHEVTSPQAFDGLRLAGRPVRRPDLTIATEDHNVPTVDIDKPIADPVSRTQVETLRRNCAEFGIRLHPMGDVEQGIVHVVGPQLGLTQPGMTIVCGDSHTSTHGAFGALAMGIGTSEVEHVLATQTLPLRPFKTMAVNVDGRLPAGVSAKDIILALIAKIGTGGGQGHVIEYRGSAIESLSMEGRMTICNMSIEAGARAGMVAPDETTYEYLRNRPHAPTGAQWDAALGYWQQLRTDPGAVFDTEVHLDAAELSPFVTWGTNPGQGVPLCATVPDPELIGDDGERQAAEKALAYMDLEPGKAMRDIAVDAVFVGSCTNGRIEDLRVVAEVLRGRKVAPGVRMLIVPGSMRVRAQAEKEGLGEVFTVAGAEWRQAGCSMCLGMNPDQLAPGERCAATSNRNFEGRQGKGGRTHLVSPAVAAATAVRGTLSAPADLN.

Residues C354, C414, and C417 each contribute to the [4Fe-4S] cluster site.

The protein belongs to the aconitase/IPM isomerase family. LeuC type 1 subfamily. In terms of assembly, heterodimer of LeuC and LeuD. [4Fe-4S] cluster is required as a cofactor.

It carries out the reaction (2R,3S)-3-isopropylmalate = (2S)-2-isopropylmalate. Its pathway is amino-acid biosynthesis; L-leucine biosynthesis; L-leucine from 3-methyl-2-oxobutanoate: step 2/4. Catalyzes the isomerization between 2-isopropylmalate and 3-isopropylmalate, via the formation of 2-isopropylmaleate. This Mycobacterium marinum (strain ATCC BAA-535 / M) protein is 3-isopropylmalate dehydratase large subunit.